The chain runs to 411 residues: Tyrosine--tRNA ligase (411 aa).

Y36 provides a ligand contact to L-tyrosine. Residues 41 to 50 (PTADSLHVGH) carry the 'HIGH' region motif. L-tyrosine contacts are provided by Y172 and Q176. The 'KMSKS' region signature appears at 232–236 (KMGKT). Residue K235 participates in ATP binding. One can recognise an S4 RNA-binding domain in the interval 344-409 (YSIANILVVT…GKKNHIKVII (66 aa)).

The protein belongs to the class-I aminoacyl-tRNA synthetase family. TyrS type 1 subfamily. As to quaternary structure, homodimer.

The protein resides in the cytoplasm. It carries out the reaction tRNA(Tyr) + L-tyrosine + ATP = L-tyrosyl-tRNA(Tyr) + AMP + diphosphate + H(+). Catalyzes the attachment of tyrosine to tRNA(Tyr) in a two-step reaction: tyrosine is first activated by ATP to form Tyr-AMP and then transferred to the acceptor end of tRNA(Tyr). The chain is Tyrosine--tRNA ligase from Malacoplasma penetrans (strain HF-2) (Mycoplasma penetrans).